Consider the following 626-residue polypeptide: Nuclear receptor subfamily 4 group A member 3 (626 aa).

Residues 1-108 (MPCVQAQYSP…HHHHHHHHHH (108 aa)) are activation function (AF)-1 domain. Residues 1-138 (MPCVQAQYSP…PSTSMYFKQS (138 aa)) are required for DNA-PK heterotrimer. The interaction with NCOA1, NCOA2, NCOA3 and KAT2B stretch occupies residues 1–291 (MPCVQAQYSP…SRSSSSGEGT (291 aa)). Disordered regions lie at residues 92 to 152 (PSYH…PPQA), 192 to 211 (HFKPSPPHPPAPSPAGGHHL), and 265 to 284 (PTASSLLGESPSLPSPPSRS). Basic residues predominate over residues 93–110 (SYHHHHHHHHHHHHHHQQ). 2 stretches are compositionally biased toward pro residues: residues 140–149 (PSTPTTPAFP) and 195–204 (PSPPHPPAPS). A compositionally biased stretch (low complexity) spans 268 to 284 (SSLLGESPSLPSPPSRS). The segment at residues 289 to 364 (EGTCAVCGDN…VGMVKEVVRT (76 aa)) is a DNA-binding region (nuclear receptor). NR C4-type zinc fingers lie at residues 292–312 (CAVCGDNAACQHYGVRTCEGC) and 328–352 (CLANKNCPVDKRRRNRCQYCRFQKC). Positions 364 to 394 (TDSLKGRRGRLPSKPKSPLQQEPSQPSPPSP) are disordered. The segment covering 377-387 (KPKSPLQQEPS) has biased composition (low complexity). Residues 379-626 (KSPLQQEPSQ…DKLFLDTLPF (248 aa)) are interaction with KAT2B. The NR LBD domain maps to 394 to 623 (PPICMMNALV…SIIDKLFLDT (230 aa)).

The protein belongs to the nuclear hormone receptor family. NR4 subfamily. In terms of assembly, interacts with SIX3 (via homeobox); differentially regulates the transcriptional activities of NR4A3. Interacts with the constituents of DNA-PK heterotrimer PRKDC, XRCC6 and XRCC5; phosphorylates and prevents NR4A3 ubiquitinylation and degradation. Interacts with NCOA2; potentiates the activity of the NR4A3. Interacts with NCOA1, NCOA3, MED1 and KAT2B. Interacts with EP300 and NCOA2; mediates the recruitment of MED1 in the coactivator complex. Interacts with NR3C1 (via nuclear receptor DNA-binding domain); the interactions represses transcription activity of NR4A3 on the POMC promoter Nur response element (NurRE). Interacts with TRIM28; the interactions potentiates NR4A3 activity on NurRE promoter. Binds DNA as a monomer and homodimer. Interacts with PARP1; activates PARP1 by improving acetylation of PARP1 and suppressing the interaction between PARP1 and SIRT1. Phosphorylated by PRKDC. In terms of tissue distribution, isoform alpha is highly expressed in skeletal muscle. Isoform beta is highly expressed in skeletal muscle and low expressed in fetal brain and placenta.

It localises to the nucleus. Its function is as follows. Transcriptional activator that binds to regulatory elements in promoter regions in a cell- and response element (target)-specific manner. Induces gene expression by binding as monomers to the NR4A1 response element (NBRE) 5'-AAAAGGTCA-3' site and as homodimers to the Nur response element (NurRE) site in the promoter of their regulated target genes. Plays a role in the regulation of proliferation, survival and differentiation of many different cell types and also in metabolism and inflammation. Mediates proliferation of vascular smooth muscle, myeloid progenitor cell and type B pancreatic cells; promotes mitogen-induced vascular smooth muscle cell proliferation through transactivation of SKP2 promoter by binding a NBRE site. Upon PDGF stimulation, stimulates vascular smooth muscle cell proliferation by regulating CCND1 and CCND2 expression. In islets, induces type B pancreatic cell proliferation through up-regulation of genes that activate cell cycle, as well as genes that cause degradation of the CDKN1A. Negatively regulates myeloid progenitor cell proliferation by repressing RUNX1 in a NBRE site-independent manner. During inner ear, plays a role as a key mediator of the proliferative growth phase of semicircular canal development. Also mediates survival of neuron and smooth muscle cells; mediates CREB-induced neuronal survival, and during hippocampus development, plays a critical role in pyramidal cell survival and axonal guidance. Is required for S phase entry of the cell cycle and survival of smooth muscle cells by inducing CCND1, resulting in RB1 phosphorylation. Binds to NBRE motif in CCND1 promoter, resulting in the activation of the promoter and CCND1 transcription. Also plays a role in inflammation; upon TNF stimulation, mediates monocyte adhesion by inducing the expression of VCAM1 and ICAM1 by binding to the NBRE consensus site. In mast cells activated by Fc-epsilon receptor cross-linking, promotes the synthesis and release of cytokines but impairs events leading to degranulation. Also plays a role in metabolism; by modulating feeding behavior; and by playing a role in energy balance by inhibiting the glucocorticoid-induced orexigenic neuropeptides AGRP expression, at least in part by forming a complex with activated NR3C1 on the AGRP- glucocorticoid response element (GRE), and thus weakening the DNA binding activity of NR3C1. Upon catecholamines stimulation, regulates gene expression that controls oxidative metabolism in skeletal muscle. Plays a role in glucose transport by regulating translocation of the SLC2A4 glucose transporter to the cell surface. Finally, during gastrulation plays a crucial role in the formation of anterior mesoderm by controlling cell migration. Inhibits adipogenesis. Also participates in cardiac hypertrophy by activating PARP1. The polypeptide is Nuclear receptor subfamily 4 group A member 3 (NR4A3) (Homo sapiens (Human)).